Consider the following 190-residue polypeptide: Casparian strip membrane protein 1 (190 aa).

Residues 1–24 are Cytoplasmic-facing; sequence MKAESGSADAKLPLPPPVGRKRRG. Residues 25–45 traverse the membrane as a helical segment; sequence LAILDFLLRLLAIGATLSAAI. Residues 46-72 lie on the Extracellular side of the membrane; sequence AMGTNNETLKFFTQFFQFNARFYNLSA. Residues asparagine 51 and asparagine 69 are each glycosylated (N-linked (GlcNAc...) asparagine). Residues 73 to 93 traverse the membrane as a helical segment; the sequence is FIYFVIANATVGLYLLLSLPF. At 94–107 the chain is on the cytoplasmic side; sequence SIFDIVRPRAAAFR. A helical membrane pass occupies residues 108–128; sequence VLLIFFDTVMVAVCTSGAAAA. Topologically, residues 129–157 are extracellular; it reads TAIMYVARRGNTKTNWFSICQQFNSFCDQ. The helical transmembrane segment at 158–178 threads the bilayer; sequence ATGALGASFAAVVLLILLVLL. Residues 179–190 are Cytoplasmic-facing; that stretch reads SASTLHRQRADF.

This sequence belongs to the Casparian strip membrane proteins (CASP) family. In terms of assembly, homodimer and heterodimers.

The protein localises to the cell membrane. Its function is as follows. Regulates membrane-cell wall junctions and localized cell wall deposition. Required for establishment of the Casparian strip membrane domain (CSD) and the subsequent formation of Casparian strips, a cell wall modification of the root endodermis that determines an apoplastic barrier between the intraorganismal apoplasm and the extraorganismal apoplasm and prevents lateral diffusion. The polypeptide is Casparian strip membrane protein 1 (Pinus taeda (Loblolly pine)).